A 254-amino-acid polypeptide reads, in one-letter code: Pyridoxine 5'-phosphate synthase (254 aa).

Asn-8 provides a ligand contact to 3-amino-2-oxopropyl phosphate. 10–11 contributes to the 1-deoxy-D-xylulose 5-phosphate binding site; sequence DH. Arg-19 is a binding site for 3-amino-2-oxopropyl phosphate. Catalysis depends on His-44, which acts as the Proton acceptor. 1-deoxy-D-xylulose 5-phosphate is bound by residues Arg-46 and His-51. Glu-74 acts as the Proton acceptor in catalysis. Residue Thr-104 coordinates 1-deoxy-D-xylulose 5-phosphate. His-198 serves as the catalytic Proton donor. 3-amino-2-oxopropyl phosphate-binding positions include Gly-199 and 220-221; that span reads GH.

The protein belongs to the PNP synthase family. Homooctamer; tetramer of dimers.

The protein resides in the cytoplasm. The catalysed reaction is 3-amino-2-oxopropyl phosphate + 1-deoxy-D-xylulose 5-phosphate = pyridoxine 5'-phosphate + phosphate + 2 H2O + H(+). It functions in the pathway cofactor biosynthesis; pyridoxine 5'-phosphate biosynthesis; pyridoxine 5'-phosphate from D-erythrose 4-phosphate: step 5/5. In terms of biological role, catalyzes the complicated ring closure reaction between the two acyclic compounds 1-deoxy-D-xylulose-5-phosphate (DXP) and 3-amino-2-oxopropyl phosphate (1-amino-acetone-3-phosphate or AAP) to form pyridoxine 5'-phosphate (PNP) and inorganic phosphate. This is Pyridoxine 5'-phosphate synthase from Caulobacter vibrioides (strain ATCC 19089 / CIP 103742 / CB 15) (Caulobacter crescentus).